The following is a 131-amino-acid chain: Calvin cycle protein CP12-2, chloroplastic (131 aa).

Residues 1–53 (MATIATGLNIATQRVFVTSENRPVCLAGPVHLNNSWNLGSRTTNRMMKLQPIK) constitute a chloroplast transit peptide. Intrachain disulfides connect Cys75-Cys84 and Cys117-Cys126. A disordered region spans residues 97–131 (AASHARDKKKADGSDPLEEYCKDNPETNECRTYDN). Basic and acidic residues predominate over residues 105–131 (KKADGSDPLEEYCKDNPETNECRTYDN).

Belongs to the CP12 family. As to quaternary structure, monomer. Component of a complex that contains two dimers of PRK, two tetramers of GAPDH and CP12. CP12 associates with GAPDH, causing its conformation to change. This GAPDH/CP12 complex binds PRK to form a half-complex (one unit). This unit probably dimerizes due partially to interactions between the enzymes of each unit. In terms of processing, contains two disulfide bonds; only the oxidized protein, with two disulfide bonds, is active in complex formation. The C-terminal disulfide is involved in the interaction with GAPDH and the N-terminal disulfide mediates the binding of PRK with this binary complex. As to expression, mostly expressed in cotyledons, leaves and flower stalks, and, to a lower extent, in flowers and stems. Barely detectable in roots and siliques.

The protein resides in the plastid. Its subcellular location is the chloroplast. Its function is as follows. Acts as a linker essential in the assembly of a core complex of PRK/GAPDH. Coordinates the reversible inactivation of chloroplast enzymes GAPDH and PRK during darkness in photosynthetic tissues. In Arabidopsis thaliana (Mouse-ear cress), this protein is Calvin cycle protein CP12-2, chloroplastic (CP12-2).